The sequence spans 86 residues: Cell division topological specificity factor (86 aa).

Belongs to the MinE family.

Functionally, prevents the cell division inhibition by proteins MinC and MinD at internal division sites while permitting inhibition at polar sites. This ensures cell division at the proper site by restricting the formation of a division septum at the midpoint of the long axis of the cell. The polypeptide is Cell division topological specificity factor (Rhizobium rhizogenes (strain K84 / ATCC BAA-868) (Agrobacterium radiobacter)).